A 308-amino-acid polypeptide reads, in one-letter code: Palmitoyltransferase ZDHHC7 (308 aa).

The Cytoplasmic portion of the chain corresponds to 1–50; the sequence is MQPSGHRLRDIEHHPLLTDNDNYDSASSSSSEADMADRVWFIRDGCGMVC. Residues 51–71 traverse the membrane as a helical segment; the sequence is AVMTWLLVVYADFVVTFVMLL. Residues 72–75 are Lumenal-facing; it reads PSKD. A helical transmembrane segment spans residues 76 to 96; the sequence is FWYSVVNGVLFNCLAVLALSS. The Cytoplasmic segment spans residues 97-173; it reads HLRTMLTDPG…NNCVGEKNQR (77 aa). Residues 130 to 180 enclose the DHHC domain; sequence YKCPKCCCIKPERAHHCSICKRCIRKMDHHCPWVNNCVGEKNQRFFVLFTM. The active-site S-palmitoyl cysteine intermediate is Cys-160. The chain crosses the membrane as a helical span at residues 174–194; the sequence is FFVLFTMYIALSSIHALILCG. Over 195–217 the chain is Lumenal; sequence LQFISCVRGQWTECSDFSPPITV. A helical transmembrane segment spans residues 218 to 238; sequence ILLVFLCLEGLLFFTFTAVMF. At 239-308 the chain is on the cytoplasmic side; it reads GTQIHSICND…TRKGGPEFSV (70 aa).

Belongs to the DHHC palmitoyltransferase family. As to quaternary structure, homooligomers. Heterooligomers with ZDHHC3. In terms of processing, autopalmitoylated. Widely expressed. Present in Sertoli cells (at protein level).

Its subcellular location is the golgi apparatus membrane. The catalysed reaction is L-cysteinyl-[protein] + hexadecanoyl-CoA = S-hexadecanoyl-L-cysteinyl-[protein] + CoA. It catalyses the reaction L-cysteinyl-[protein] + tetradecanoyl-CoA = S-tetradecanoyl-L-cysteinyl-[protein] + CoA. The enzyme catalyses L-cysteinyl-[protein] + octadecanoyl-CoA = S-octadecanoyl-L-cysteinyl-[protein] + CoA. Its function is as follows. Golgi-localized palmitoyltransferase that catalyzes the addition of palmitate onto various protein substrates and therefore functions in several unrelated biological processes. Has no stringent fatty acid selectivity and in addition to palmitate can also transfer onto target proteins myristate from tetradecanoyl-CoA and stearate from octadecanoyl-CoA. Palmitoylates sex steroid hormone receptors, including ESR1, PGR and AR, thereby regulating their targeting to the plasma membrane and their function in rapid intracellular signaling upon binding of sex hormones. Palmitoylates GNAQ, a heterotrimeric G protein, regulating its dynamic localization at the plasma membrane and is thereby involved in GNAQ-dependent G protein-coupled receptor signaling pathways. Also functions in ligand-induced cell death by regulating the FAS signaling pathway through the palmitoylation and stabilization of the receptor at the plasma membrane. In epithelial cells, palmitoylates SCRIB and regulates its localization to the plasma membrane, regulating indirectly cell polarity and differentiation. Also palmitoylates JAM3 and promotes its expression at tight junctions and regulates its function in cell migration. Palmitoylates the glucose transporter GLUT4/SLC2A4 and controls the insulin-dependent translocation of GLUT4 to the plasma membrane. In brain, could also palmitoylate SNAP25 and DLG4/PSD95. Could also palmitoylate DNAJC5 and regulate its localization to the Golgi membrane. Could also palmitoylate NCDN. May play a role in follicle stimulation hormone (FSH) activation of testicular Sertoli cells. Activates pyroptosis by catalyzing palmitoylation of gasdermin-D (GSDMD). The chain is Palmitoyltransferase ZDHHC7 from Rattus norvegicus (Rat).